The chain runs to 414 residues: Alanine--glyoxylate aminotransferase (414 aa).

A mitochondrion-targeting transit peptide spans 1–23; it reads MFRMLAKASVTLGSRAAGWVRTM. Residue K231 is modified to N6-(pyridoxal phosphate)lysine. K247 is modified (N6-acetyllysine; alternate). K247 carries the post-translational modification N6-succinyllysine; alternate. Residue K256 is modified to N6-acetyllysine. K330 carries the post-translational modification N6-acetyllysine; alternate. Position 330 is an N6-succinyllysine; alternate (K330). Position 334 is an N6-acetyllysine (K334). A substrate-binding site is contributed by R382. A Microbody targeting signal motif is present at residues 412–414; it reads NKL.

The protein belongs to the class-V pyridoxal-phosphate-dependent aminotransferase family. As to quaternary structure, homodimer. Requires pyridoxal 5'-phosphate as cofactor.

The protein resides in the peroxisome. It localises to the mitochondrion matrix. The catalysed reaction is L-serine + pyruvate = 3-hydroxypyruvate + L-alanine. It carries out the reaction glyoxylate + L-alanine = glycine + pyruvate. Its function is as follows. Catalyzes the transamination of glyoxylate to glycine and contributes to the glyoxylate detoxification. In terms of biological role, catalyzes the transamination between L-serine and pyruvate and weakly contributes to gluconeogenesis from the L-serine metabolism. In Mus musculus (Mouse), this protein is Alanine--glyoxylate aminotransferase.